Reading from the N-terminus, the 281-residue chain is Probable endonuclease 4 (281 aa).

Residues histidine 69, histidine 109, glutamate 145, aspartate 179, histidine 182, histidine 216, aspartate 229, histidine 231, and glutamate 261 each coordinate Zn(2+).

This sequence belongs to the AP endonuclease 2 family. Requires Zn(2+) as cofactor.

The enzyme catalyses Endonucleolytic cleavage to 5'-phosphooligonucleotide end-products.. Endonuclease IV plays a role in DNA repair. It cleaves phosphodiester bonds at apurinic or apyrimidinic (AP) sites, generating a 3'-hydroxyl group and a 5'-terminal sugar phosphate. This is Probable endonuclease 4 from Chlorobaculum tepidum (strain ATCC 49652 / DSM 12025 / NBRC 103806 / TLS) (Chlorobium tepidum).